The primary structure comprises 225 residues: Esterase OVCA2 (225 aa).

Active-site charge relay system residues include S119, D177, and H204.

It belongs to the LovG family. In terms of tissue distribution, strongly expressed in kidney and liver. Moderately expressed in brain, skin and testis. Weakly expressed in heart, lung, small intestine, spleen, stomach and thymus.

It carries out the reaction a carboxylic ester + H2O = an alcohol + a carboxylate + H(+). Functionally, exhibits ester hydrolase activity with a strong preference for long-chain alkyl ester substrates and high selectivity against a variety of short, branched, and substituted esters. Is able to hydrolyze ester bonds within a wide range of p-nitrophenyl derivatives (C2-C14) in vitro, with a strong preference toward substrates of &gt;8 carbons. The protein is Esterase OVCA2 (Ovca2) of Mus musculus (Mouse).